A 124-amino-acid polypeptide reads, in one-letter code: uncharacterized protein (124 aa).

Not required for the biogenesis of c-type cytochromes. This is an uncharacterized protein from Rhodobacter capsulatus (strain ATCC BAA-309 / NBRC 16581 / SB1003).